Consider the following 366-residue polypeptide: Latent membrane protein 1 (366 aa).

Topologically, residues M1–S23 are cytoplasmic. A helical membrane pass occupies residues S24–L44. Topologically, residues S45 to A51 are extracellular. The chain crosses the membrane as a helical span at residues L52–F72. The Cytoplasmic segment spans residues R73 to D75. The helical transmembrane segment at L76–A96 threads the bilayer. At L97 to Y106 the chain is on the extracellular side. A helical membrane pass occupies residues L107–L127. Residues E128–Q139 are Cytoplasmic-facing. Residues L140 to L160 traverse the membrane as a helical segment. Residues Q161–N163 are Extracellular-facing. Residues W164–M184 form a helical membrane-spanning segment. At Y185–D366 the chain is on the cytoplasmic side. Residues E194–G232 form a CTAR1 region. The tract at residues E194–D366 is disordered. Positions P204 to T208 match the Interaction with host TRAF proteins motif. A compositionally biased stretch (basic and acidic residues) spans D210–H224. 2 stretches are compositionally biased toward low complexity: residues N251–P267 and P337–T346. The interval G332–D366 is CTAR2.

The protein belongs to the herpesviridae LMP-1 family. In terms of assembly, interacts (via PXQXT motif) with host tumor necrosis factor receptor-associated factor (TRAF) proteins TRAF1, TRAF2, TRAF3 and TRAF5. Interacts with human protein ZMYND11; leading to negatively regulate NF-kappa-B activation. Interacts with host UBE2I; this interaction induces the sumoylation of various cellular proteins. Interacts with host IRF7. Post-translationally, ubiquitinated on the N-terminus.

It localises to the host cell membrane. In terms of biological role, acts as a CD40 functional homolog to prevent apoptosis of infected B-lymphocytes and drive their proliferation. Functions as a constitutively active tumor necrosis factor receptor that induces the activation of several signaling pathways, including those of the NF-kappa-B family. LMP1 signaling leads to up-regulation of antiapoptotic proteins and provide growth signals in latently infected cells. Interacts with host UBE2I and subsequently affects the sumoylation state of several cellular proteins. For example, induces the sumoylation of host IRF7 thereby limiting its transcriptional activity and modulating the activation of innate immune responses. Also inhibits host IFN-alpha-stimulated STAT2 nuclear translocation and interferon-stimulated response element transcriptional activity by interacting with and inhibiting host TYK2. Induces SUMO expression during viral latency thereby dysregulating the host sumoylation processes. The protein is Latent membrane protein 1 (LMP1) of Homo sapiens (Human).